We begin with the raw amino-acid sequence, 308 residues long: Energy-coupling factor transporter ATP-binding protein EcfA2 (308 aa).

Residues 3–263 (IEVKNISKVF…VDFLRENEME (261 aa)) enclose the ABC transporter domain. 40 to 47 (GPTGSGKT) contributes to the ATP binding site.

This sequence belongs to the ABC transporter superfamily. Energy-coupling factor EcfA family. As to quaternary structure, forms a stable energy-coupling factor (ECF) transporter complex composed of 2 membrane-embedded substrate-binding proteins (S component), 2 ATP-binding proteins (A component) and 2 transmembrane proteins (T component).

The protein localises to the cell membrane. In terms of biological role, ATP-binding (A) component of a common energy-coupling factor (ECF) ABC-transporter complex. Unlike classic ABC transporters this ECF transporter provides the energy necessary to transport a number of different substrates. This Mycoplasma mobile (strain ATCC 43663 / 163K / NCTC 11711) (Mesomycoplasma mobile) protein is Energy-coupling factor transporter ATP-binding protein EcfA2.